A 238-amino-acid chain; its full sequence is Dolichyldiphosphatase 1 (238 aa).

A run of 4 helical transmembrane segments spans residues 33–53 (LAYL…LIIF), 100–120 (PSSH…FLYL), 130–150 (FLDL…AFLV), and 162–182 (WSQV…WFIF).

This sequence belongs to the dolichyldiphosphatase family.

The protein localises to the endoplasmic reticulum membrane. The catalysed reaction is a di-trans,poly-cis-dolichyl diphosphate + H2O = a di-trans,poly-cis-dolichyl phosphate + phosphate + H(+). The protein operates within protein modification; protein glycosylation. Required for efficient N-glycosylation. Necessary for maintaining optimal levels of dolichol-linked oligosaccharides. Hydrolyzes dolichyl pyrophosphate at a very high rate and dolichyl monophosphate at a much lower rate. Does not act on phosphatidate. This Homo sapiens (Human) protein is Dolichyldiphosphatase 1 (DOLPP1).